A 256-amino-acid chain; its full sequence is Triosephosphate isomerase (256 aa).

Position 9–11 (9–11 (NWK)) interacts with substrate. Catalysis depends on His-97, which acts as the Electrophile. Glu-169 serves as the catalytic Proton acceptor. Residues Gly-175, Ser-214, and 235–236 (GG) each bind substrate.

It belongs to the triosephosphate isomerase family. Homodimer.

It localises to the cytoplasm. The catalysed reaction is D-glyceraldehyde 3-phosphate = dihydroxyacetone phosphate. It participates in carbohydrate biosynthesis; gluconeogenesis. It functions in the pathway carbohydrate degradation; glycolysis; D-glyceraldehyde 3-phosphate from glycerone phosphate: step 1/1. In terms of biological role, involved in the gluconeogenesis. Catalyzes stereospecifically the conversion of dihydroxyacetone phosphate (DHAP) to D-glyceraldehyde-3-phosphate (G3P). The polypeptide is Triosephosphate isomerase (Aliivibrio fischeri (strain ATCC 700601 / ES114) (Vibrio fischeri)).